Reading from the N-terminus, the 176-residue chain is MDLPGPIHDFILVFLGLVLILGGLAVVLLPNPIYSAFSLGLVLVCISLLYILSNSHFLAAAQLLIYVGAINVLIIFAVMFLNGSEYYKDLNPWTVGDGVTSVVCTSLFASLITTIPDTSWYGIIWTTKSNQIIEQDLINNSQEIGIHLSTDFLIPFELISIILLVALIGAIAVARQ.

Transmembrane regions (helical) follow at residues 10 to 30 (FILV…VLLP), 32 to 52 (PIYS…LYIL), 61 to 81 (AQLL…VMFL), 95 to 115 (VGDG…ITTI), and 152 to 172 (FLIP…GAIA).

It belongs to the complex I subunit 6 family. NDH is composed of at least 16 different subunits, 5 of which are encoded in the nucleus.

It is found in the plastid. The protein localises to the chloroplast thylakoid membrane. It catalyses the reaction a plastoquinone + NADH + (n+1) H(+)(in) = a plastoquinol + NAD(+) + n H(+)(out). It carries out the reaction a plastoquinone + NADPH + (n+1) H(+)(in) = a plastoquinol + NADP(+) + n H(+)(out). Its function is as follows. NDH shuttles electrons from NAD(P)H:plastoquinone, via FMN and iron-sulfur (Fe-S) centers, to quinones in the photosynthetic chain and possibly in a chloroplast respiratory chain. The immediate electron acceptor for the enzyme in this species is believed to be plastoquinone. Couples the redox reaction to proton translocation, and thus conserves the redox energy in a proton gradient. This chain is NAD(P)H-quinone oxidoreductase subunit 6, chloroplastic (ndhG), found in Trachelium caeruleum (Blue throatwort).